A 214-amino-acid polypeptide reads, in one-letter code: Adenylate kinase (214 aa).

10 to 15 (GAGKGT) serves as a coordination point for ATP. The interval 30 to 59 (STGDMFRAAVKNETPLGLEAKSYMDKGHLV) is NMP. AMP-binding positions include T31, R36, 57–59 (HLV), 85–88 (GFPR), and Q92. An LID region spans residues 126–163 (GRWICPVCGASYHTMFNPPKEAGVCDKDGGKLYQREDD). R127 is a binding site for ATP. 2 residues coordinate Zn(2+): C130 and C133. Residue 136-137 (SY) coordinates ATP. Zn(2+)-binding residues include C150 and D153. The AMP site is built by R160 and R171. Residue Q199 coordinates ATP.

The protein belongs to the adenylate kinase family. As to quaternary structure, monomer.

It localises to the cytoplasm. It carries out the reaction AMP + ATP = 2 ADP. Its pathway is purine metabolism; AMP biosynthesis via salvage pathway; AMP from ADP: step 1/1. Functionally, catalyzes the reversible transfer of the terminal phosphate group between ATP and AMP. Plays an important role in cellular energy homeostasis and in adenine nucleotide metabolism. The sequence is that of Adenylate kinase from Brevibacillus brevis (strain 47 / JCM 6285 / NBRC 100599).